Reading from the N-terminus, the 902-residue chain is Translation initiation factor IF-2 (902 aa).

Residues 137–177 (NLDEQQRLAESDRARDEAIQRKRDEEQAAKDRVEAERKAAE) are compositionally biased toward basic and acidic residues. Disordered stretches follow at residues 137 to 248 (NLDE…SHVM) and 266 to 314 (HLSA…ERPT). Low complexity-rich tracts occupy residues 178–229 (EAAA…ATPA) and 279–291 (RGKPTGRPGSSSS). A tr-type G domain is found at 401–570 (SRPPVVTIMG…SLQAEVLELK (170 aa)). The G1 stretch occupies residues 410–417 (GHVDHGKT). A GTP-binding site is contributed by 410 to 417 (GHVDHGKT). The G2 stretch occupies residues 435–439 (GITQH). The tract at residues 456–459 (DTPG) is G3. GTP-binding positions include 456-460 (DTPGH) and 510-513 (NKID). The G4 stretch occupies residues 510 to 513 (NKID). The interval 546–548 (SAK) is G5.

Belongs to the TRAFAC class translation factor GTPase superfamily. Classic translation factor GTPase family. IF-2 subfamily.

The protein localises to the cytoplasm. Functionally, one of the essential components for the initiation of protein synthesis. Protects formylmethionyl-tRNA from spontaneous hydrolysis and promotes its binding to the 30S ribosomal subunits. Also involved in the hydrolysis of GTP during the formation of the 70S ribosomal complex. The protein is Translation initiation factor IF-2 of Xanthomonas campestris pv. campestris (strain 8004).